The primary structure comprises 178 residues: Small ribosomal subunit protein uS4 (178 aa).

The S4 RNA-binding domain maps to 104–166 (RRLQTLVYRK…PNSPMALENH (63 aa)).

It belongs to the universal ribosomal protein uS4 family. In terms of assembly, part of the 30S ribosomal subunit. Contacts protein S5. The interaction surface between S4 and S5 is involved in control of translational fidelity.

Functionally, one of the primary rRNA binding proteins, it binds directly to 16S rRNA where it nucleates assembly of the body of the 30S subunit. With S5 and S12 plays an important role in translational accuracy. This chain is Small ribosomal subunit protein uS4, found in Methanococcus vannielii (strain ATCC 35089 / DSM 1224 / JCM 13029 / OCM 148 / SB).